The primary structure comprises 157 residues: UPF0262 protein Avi_0642 (157 aa).

The protein belongs to the UPF0262 family.

This Allorhizobium ampelinum (strain ATCC BAA-846 / DSM 112012 / S4) (Agrobacterium vitis (strain S4)) protein is UPF0262 protein Avi_0642.